Consider the following 267-residue polypeptide: Very long chain fatty acid elongase 6 (267 aa).

Asn-2 carries an N-linked (GlcNAc...) asparagine glycan. The next 7 membrane-spanning stretches (helical) occupy residues 34–51 (FLFS…RHLM), 70–90 (LAVF…YILM), 111–131 (FWAY…IFII), 136–156 (KLIF…WYSY), 159–179 (MVAG…VMYS), 197–217 (FITL…YLVF), and 234–254 (IFWS…FFFE).

It belongs to the ELO family. ELOVL6 subfamily. Post-translationally, N-Glycosylated. As to expression, expressed in liver and barely in brain.

It is found in the endoplasmic reticulum membrane. It carries out the reaction a very-long-chain acyl-CoA + malonyl-CoA + H(+) = a very-long-chain 3-oxoacyl-CoA + CO2 + CoA. It catalyses the reaction hexadecanoyl-CoA + malonyl-CoA + H(+) = 3-oxooctadecanoyl-CoA + CO2 + CoA. The enzyme catalyses (9Z)-hexadecenoyl-CoA + malonyl-CoA + H(+) = 3-oxo-(11Z)-octadecenoyl-CoA + CO2 + CoA. The catalysed reaction is dodecanoyl-CoA + malonyl-CoA + H(+) = 3-oxotetradecanoyl-CoA + CO2 + CoA. It carries out the reaction tetradecanoyl-CoA + malonyl-CoA + H(+) = 3-oxohexadecanoyl-CoA + CO2 + CoA. It catalyses the reaction (9Z)-octadecenoyl-CoA + malonyl-CoA + H(+) = 3-oxo-(11Z)-eicosenoyl-CoA + CO2 + CoA. The enzyme catalyses (9Z,12Z)-octadecadienoyl-CoA + malonyl-CoA + H(+) = (11Z,14Z)-3-oxoicosa-11,14-dienoyl-CoA + CO2 + CoA. The catalysed reaction is (9Z,12Z,15Z)-octadecatrienoyl-CoA + malonyl-CoA + H(+) = (11Z,14Z,17Z)-3-oxoeicosatrienoyl-CoA + CO2 + CoA. Its pathway is lipid metabolism; fatty acid biosynthesis. The reaction is stimulated by the presence of HSD17B12, the enzyme catalyzing the second step of the elongation cycle. Catalyzes the first and rate-limiting reaction of the four reactions that constitute the long-chain fatty acids elongation cycle. This endoplasmic reticulum-bound enzymatic process allows the addition of 2 carbons to the chain of long- and very long-chain fatty acids (VLCFAs) per cycle. Condensing enzyme that elongates fatty acids with 12, 14 and 16 carbons with higher activity toward C16:0 acyl-CoAs. Catalyzes the synthesis of unsaturated C16 long chain fatty acids and, to a lesser extent, C18:0 and those with low desaturation degree. May participate in the production of saturated and monounsaturated VLCFAs of different chain lengths that are involved in multiple biological processes as precursors of membrane lipids and lipid mediators. The protein is Very long chain fatty acid elongase 6 of Rattus norvegicus (Rat).